The sequence spans 353 residues: tRNA-specific 2-thiouridylase MnmA (353 aa).

ATP contacts are provided by residues 6–13 and leucine 32; that span reads GMSGGVDS. Residue cysteine 99 is the Nucleophile of the active site. A disulfide bond links cysteine 99 and cysteine 197. Glycine 124 contacts ATP. Residues 147–149 form an interaction with tRNA region; it reads KDQ. Cysteine 197 functions as the Cysteine persulfide intermediate in the catalytic mechanism. Positions 303–304 are interaction with tRNA; sequence RY.

It belongs to the MnmA/TRMU family.

It localises to the cytoplasm. It catalyses the reaction S-sulfanyl-L-cysteinyl-[protein] + uridine(34) in tRNA + AH2 + ATP = 2-thiouridine(34) in tRNA + L-cysteinyl-[protein] + A + AMP + diphosphate + H(+). Its function is as follows. Catalyzes the 2-thiolation of uridine at the wobble position (U34) of tRNA, leading to the formation of s(2)U34. The chain is tRNA-specific 2-thiouridylase MnmA from Persephonella marina (strain DSM 14350 / EX-H1).